A 114-amino-acid polypeptide reads, in one-letter code: Putative membrane protein insertion efficiency factor (114 aa).

Belongs to the UPF0161 family.

Its subcellular location is the cell inner membrane. Could be involved in insertion of integral membrane proteins into the membrane. This is Putative membrane protein insertion efficiency factor from Wolinella succinogenes (strain ATCC 29543 / DSM 1740 / CCUG 13145 / JCM 31913 / LMG 7466 / NCTC 11488 / FDC 602W) (Vibrio succinogenes).